We begin with the raw amino-acid sequence, 355 residues long: Uroporphyrinogen decarboxylase (355 aa).

Substrate contacts are provided by residues 27-31, D77, Y154, T209, and H328; that span reads RQAGR.

Belongs to the uroporphyrinogen decarboxylase family. As to quaternary structure, homodimer.

Its subcellular location is the cytoplasm. The catalysed reaction is uroporphyrinogen III + 4 H(+) = coproporphyrinogen III + 4 CO2. It participates in porphyrin-containing compound metabolism; protoporphyrin-IX biosynthesis; coproporphyrinogen-III from 5-aminolevulinate: step 4/4. Functionally, catalyzes the decarboxylation of four acetate groups of uroporphyrinogen-III to yield coproporphyrinogen-III. The sequence is that of Uroporphyrinogen decarboxylase from Photobacterium profundum (strain SS9).